We begin with the raw amino-acid sequence, 933 residues long: Phospholipase SGR2 (933 aa).

Basic and acidic residues predominate over residues 1–14; that stretch reads MEDRETHLGTREVN. The interval 1–22 is disordered; the sequence is MEDRETHLGTREVNETSPDLLK. The active site involves Ser444. 2 disordered regions span residues 475–517 and 553–598; these read PDEE…GQDN and RGGQ…ESVN. Positions 505 to 517 are enriched in polar residues; sequence QLNNPEKITGQDN. A compositionally biased stretch (basic and acidic residues) spans 553-563; it reads RGGQEDDHHDS. Residues 593–631 adopt a coiled-coil conformation; it reads DKESVNSNNEERIKLLQDEVNSLRSKVAQLLSENARILS. The region spanning 669–868 is the DDHD domain; that stretch reads LEFKVDTFFA…ALFIIKHLYR (200 aa). A disordered region spans residues 871–903; the sequence is PDGPNSPTESTEGDDSPKDSSRPHSWIDRREAD. Basic and acidic residues predominate over residues 885–902; it reads DSPKDSSRPHSWIDRREA.

As to quaternary structure, forms oligomers. Expressed in roots, hypocotyls, leaves, stems and floral buds, and, at low levels, in siliques.

The protein localises to the vacuole membrane. Functionally, involved in vacuolar formation or function (e.g. formation of vacuolar membrane 'bulbs'). Required for amyloplast sedimentation in the endodermis during shoot gravitropism, which are thus acting as statoliths. Particularly important for the negative gravitropism leading to leaf movement observed in darkness. This chain is Phospholipase SGR2 (SGR2), found in Arabidopsis thaliana (Mouse-ear cress).